The primary structure comprises 71 residues: Brevinin-1SN1 (71 aa).

An N-terminal signal peptide occupies residues 1-22 (MFTMKKPLLLLFFLGTINLSLC). Residues 23–45 (EEERNADEEEKRDGDDEMDAEVE) constitute a propeptide, removed in mature form. A disulfide bridge connects residues Cys-65 and Cys-71.

It belongs to the frog skin active peptide (FSAP) family. Brevinin subfamily. Expressed by the skin glands.

It is found in the secreted. Functionally, antimicrobial peptide. Active against some Gram-negative and a variety of Gram-positive bacterial strains. Active against fungus C.glabrata 090902 but not against C.albicans ATCC 10231. Shows hemolytic activity against human erythrocytes. The protein is Brevinin-1SN1 of Sylvirana spinulosa (Fine-spined frog).